The chain runs to 143 residues: MPASKEQTDEMKEAFVLYDIDKDGLIPTSHVGSVLRSLGINVTDAELAKLSNELGDAIDEKKFMSFVSNKLRETESEEEYIKAFRVFDKDNSGYIETAKFADYMKTLGEKLSDNEVQLMVQEADPTNSGSFDYYDFVQRIMAK.

3 EF-hand domains span residues 6 to 41 (EQTD…LGIN), 75 to 110 (ESEE…LGEK), and 111 to 143 (LSDN…IMAK).

The protein belongs to the calmodulin family. As to quaternary structure, interacts with myo1 and pik1.

Its subcellular location is the cytoplasm. The protein localises to the prospore membrane. In terms of biological role, plays a role in meiosis and sporulation. This chain is Myosin 1 light chain cam2, found in Schizosaccharomyces pombe (strain 972 / ATCC 24843) (Fission yeast).